The sequence spans 117 residues: Small ribosomal subunit protein bS6 (117 aa).

Residues lysine 96–glutamate 117 form a disordered region. Residues alanine 99 to glutamate 117 are compositionally biased toward low complexity.

This sequence belongs to the bacterial ribosomal protein bS6 family.

Binds together with bS18 to 16S ribosomal RNA. In Geobacter sulfurreducens (strain ATCC 51573 / DSM 12127 / PCA), this protein is Small ribosomal subunit protein bS6.